The primary structure comprises 372 residues: DNA damage-repair/toleration protein DRT100 (372 aa).

The first 26 residues, 1–26, serve as a signal peptide directing secretion; sequence MRKLLASPFSSLLAVVFISVISVVRC. LRR repeat units lie at residues 136–158, 160–183, 184–205, 208–230, 232–254, 256–277, 280–302, 304–326, and 328–350; these read SLRILDLAGNKITGEIPAEIGKL, KLAVLNLAENQMSGEIPASLTSLI, ELKHLELTENGITGVIPADFGS, MLSRVLLGRNELTGSIPESISGM, RLADLDLSKNHIEGPIPEWMGNM, VLSLLNLDCNSLTGPIPGSLLS, GLDVANLSRNALEGTIPDVFGSK, YLVSLDLSHNSLSGRIPDSLSSA, and FVGHLDISHNKLCGRIPTGFPFD.

Its function is as follows. This protein is able to complement bacterial recA mutations, but its native function in the plant is not known. In Arabidopsis thaliana (Mouse-ear cress), this protein is DNA damage-repair/toleration protein DRT100 (DRT100).